We begin with the raw amino-acid sequence, 249 residues long: Adenosylcobinamide-GDP ribazoletransferase (249 aa).

Transmembrane regions (helical) follow at residues 36–56 (LVGFLLGSIAAGVCYAMHSIG), 57–77 (LNLAADVLGLVTIITLTGGLH), 106–126 (VGAMGVIALATVLLLKIAFLF), 133–153 (KLTAFIMAPMAGRWAMVLAIT), 188–208 (LWLFGLPGLALLGIVFFITWL), and 226–246 (GALGEMIETWVIFLILLGQQI).

This sequence belongs to the CobS family. Mg(2+) is required as a cofactor.

The protein resides in the cell membrane. The catalysed reaction is alpha-ribazole + adenosylcob(III)inamide-GDP = adenosylcob(III)alamin + GMP + H(+). The enzyme catalyses alpha-ribazole 5'-phosphate + adenosylcob(III)inamide-GDP = adenosylcob(III)alamin 5'-phosphate + GMP + H(+). Its pathway is cofactor biosynthesis; adenosylcobalamin biosynthesis; adenosylcobalamin from cob(II)yrinate a,c-diamide: step 7/7. In terms of biological role, joins adenosylcobinamide-GDP and alpha-ribazole to generate adenosylcobalamin (Ado-cobalamin). Also synthesizes adenosylcobalamin 5'-phosphate from adenosylcobinamide-GDP and alpha-ribazole 5'-phosphate. This chain is Adenosylcobinamide-GDP ribazoletransferase, found in Desulforamulus reducens (strain ATCC BAA-1160 / DSM 100696 / MI-1) (Desulfotomaculum reducens).